The chain runs to 207 residues: LexA repressor (207 aa).

A DNA-binding region (H-T-H motif) is located at residues 28–47 (VREIARRFRITPRGAQLHLV). Active-site for autocatalytic cleavage activity residues include S119 and K156.

It belongs to the peptidase S24 family. As to quaternary structure, homodimer.

The catalysed reaction is Hydrolysis of Ala-|-Gly bond in repressor LexA.. Its function is as follows. Represses a number of genes involved in the response to DNA damage (SOS response), including recA and lexA. In the presence of single-stranded DNA, RecA interacts with LexA causing an autocatalytic cleavage which disrupts the DNA-binding part of LexA, leading to derepression of the SOS regulon and eventually DNA repair. The sequence is that of LexA repressor from Thermotoga neapolitana (strain ATCC 49049 / DSM 4359 / NBRC 107923 / NS-E).